The sequence spans 1451 residues: Protein clueless (1451 aa).

2 disordered regions span residues 1-101 and 264-286; these read MALE…EYAA and KKTR…VSEP. Over residues 9-53 the composition is skewed to low complexity; that stretch reads NSNATATGDATATKASSKAKENNNTAGGKKNLNPIPSQQNSNQNL. The span at 66-75 shows a compositional bias: basic residues; it reads GKKKGKKNRN. Ser270 carries the phosphoserine modification. In terms of domain architecture, Clu spans 424–666; it reads RAEDAFSSKL…RTFPPDVNFL (243 aa). Disordered regions lie at residues 722-775, 961-1012, and 1413-1451; these read AKKQ…ESKT, AVSS…SSVS, and ANNN…ATSS. The span at 748–758 shows a compositional bias: basic and acidic residues; the sequence is GADKTDVKEEK. Residues 969-984 are compositionally biased toward basic residues; that stretch reads KKRGNGGKHNKHKSSK. Residues 989-1010 are compositionally biased toward low complexity; it reads QQQQQTTGNQNGSSSGTSNGSS.

It belongs to the CLU family.

The protein localises to the cytoplasm. In terms of biological role, mRNA-binding protein involved in proper cytoplasmic distribution of mitochondria. The sequence is that of Protein clueless from Drosophila yakuba (Fruit fly).